Consider the following 421-residue polypeptide: POU domain, class 4, transcription factor 1 (421 aa).

A POU-IV box motif is present at residues 57–66; sequence RAEALAAVDI. Disordered regions lie at residues 94-117 and 133-200; these read STVP…GDLL and GAGA…GLGH. The span at 99 to 108 shows a compositional bias: basic residues; sequence AHHHHHHHHH. Gly residues predominate over residues 133 to 186; sequence GAGAAGGGGGAHDGPGGGGGPGGGGGPGGGGPGGGGGGGGPGGGGGGPGGGLLG. Residues 262-339 form the POU-specific domain; it reads DSDTDPRELE…ILQAWLEEAE (78 aa). Residues 357 to 416 constitute a DNA-binding region (homeobox); sequence KKRKRTSIAAPEKRSLEAYFAVQPRPSSEKIAAIAEKLDLKKNVVRVWFCNQRQKQKRMK.

The protein belongs to the POU transcription factor family. Class-4 subfamily. Interacts (via N-terminus) with RIT2; the interaction controls POU4F1 transactivation activity on some neuronal target genes. Isoform 1 interacts with POU4F2 isoform 2; this interaction inhibits both POU4F1 DNA-binding and transcriptional activities. Isoform 1 interacts (C-terminus) with ESR1 (via DNA-binding domain); this interaction decreases the estrogen receptor ESR1 transcriptional activity in a DNA- and ligand 17-beta-estradiol-independent manner. In terms of tissue distribution, expressed in mature osteoclasts (at protein level). Brain, peripheral sensory nervous system and retina. In the adult nervous system, predominates in the medial habenula, superficial gray of the superior colliculus, red nucleus, mesencephalic nucleus of the trigeminal ganglion, nucleus ambiguus, inferior olivary nucleus, and peripheral sensory ganglia.

It is found in the nucleus. The protein resides in the cytoplasm. In terms of biological role, multifunctional transcription factor with different regions mediating its different effects. Acts by binding (via its C-terminal domain) to sequences related to the consensus octamer motif 5'-ATGCAAAT-3' in the regulatory regions of its target genes. Regulates the expression of specific genes involved in differentiation and survival within a subset of neuronal lineages. It has been shown that activation of some of these genes requires its N-terminal domain, maybe through a neuronal-specific cofactor. Activates BCL2 expression and protects neuronal cells from apoptosis (via the N-terminal domain). Induces neuronal process outgrowth and the coordinate expression of genes encoding synaptic proteins. Exerts its major developmental effects in somatosensory neurons and in brainstem nuclei involved in motor control. Stimulates the binding affinity of the nuclear estrogene receptor ESR1 to DNA estrogen response element (ERE), and hence modulates ESR1-induced transcriptional activity. May positively regulate POU4F2 and POU4F3. Regulates dorsal root ganglion sensory neuron specification and axonal projection into the spinal cord. Plays a role in TNFSF11-mediated terminal osteoclast differentiation. Negatively regulates its own expression interacting directly with a highly conserved autoregulatory domain surrounding the transcription initiation site. Functionally, able to act as transcription factor, cannot regulate the expression of the same subset of genes than isoform 1. Does not have antiapoptotic effect on neuronal cells. The chain is POU domain, class 4, transcription factor 1 (Pou4f1) from Mus musculus (Mouse).